Reading from the N-terminus, the 129-residue chain is Histone H2A.2 (129 aa).

N6-acetyllysine is present on lysine 5. Glutamine 108 carries the post-translational modification N5-methylglutamine.

It belongs to the histone H2A family. The nucleosome is a histone octamer containing two molecules each of H2A, H2B, H3 and H4 assembled in one H3-H4 heterotetramer and two H2A-H2B heterodimers. The octamer wraps approximately 147 bp of DNA. In terms of processing, acetylated by ESA1 to form H2AK4ac.

It is found in the nucleus. Its subcellular location is the chromosome. Its function is as follows. Core component of nucleosome which plays a central role in DNA double strand break (DSB) repair. Nucleosomes wrap and compact DNA into chromatin, limiting DNA accessibility to the cellular machineries which require DNA as a template. Histones thereby play a central role in transcription regulation, DNA repair, DNA replication and chromosomal stability. DNA accessibility is regulated via a complex set of post-translational modifications of histones, also called histone code, and nucleosome remodeling. In Lodderomyces elongisporus (strain ATCC 11503 / CBS 2605 / JCM 1781 / NBRC 1676 / NRRL YB-4239) (Yeast), this protein is Histone H2A.2 (HTA2).